Reading from the N-terminus, the 211-residue chain is Uracil phosphoribosyltransferase (211 aa).

5-phospho-alpha-D-ribose 1-diphosphate-binding positions include R79, R104, and 131–139; that span reads DPMLATGGS. Uracil is bound by residues I196 and 201 to 203; that span reads GDA. D202 is a binding site for 5-phospho-alpha-D-ribose 1-diphosphate.

The protein belongs to the UPRTase family. Mg(2+) serves as cofactor.

It catalyses the reaction UMP + diphosphate = 5-phospho-alpha-D-ribose 1-diphosphate + uracil. Its pathway is pyrimidine metabolism; UMP biosynthesis via salvage pathway; UMP from uracil: step 1/1. Allosterically activated by GTP. Catalyzes the conversion of uracil and 5-phospho-alpha-D-ribose 1-diphosphate (PRPP) to UMP and diphosphate. The protein is Uracil phosphoribosyltransferase of Limosilactobacillus fermentum (strain NBRC 3956 / LMG 18251) (Lactobacillus fermentum).